The sequence spans 131 residues: Small ribosomal subunit protein eS24 (131 aa).

Met-1 is modified (N-acetylmethionine). Thr-9 is subject to Phosphothreonine. Residue Lys-37 forms a Glycyl lysine isopeptide (Lys-Gly) (interchain with G-Cter in SUMO2) linkage. Positions 90–100 (RLARHGLYEKK) are enriched in basic and acidic residues. The segment at 90-131 (RLARHGLYEKKKTSRKQRKERKNRMKKVRGTAKANVGAGKKK) is disordered. A compositionally biased stretch (basic residues) spans 101–119 (KTSRKQRKERKNRMKKVRG).

This sequence belongs to the eukaryotic ribosomal protein eS24 family. In terms of assembly, component of the small ribosomal subunit. Part of the small subunit (SSU) processome, composed of more than 70 proteins and the RNA chaperone small nucleolar RNA (snoRNA) U3.

The protein resides in the cytoplasm. It is found in the nucleus. It localises to the nucleolus. Its function is as follows. Component of the small ribosomal subunit. The ribosome is a large ribonucleoprotein complex responsible for the synthesis of proteins in the cell. Required for processing of pre-rRNA and maturation of 40S ribosomal subunits. Part of the small subunit (SSU) processome, first precursor of the small eukaryotic ribosomal subunit. During the assembly of the SSU processome in the nucleolus, many ribosome biogenesis factors, an RNA chaperone and ribosomal proteins associate with the nascent pre-rRNA and work in concert to generate RNA folding, modifications, rearrangements and cleavage as well as targeted degradation of pre-ribosomal RNA by the RNA exosome. The chain is Small ribosomal subunit protein eS24 (RPS24) from Macaca fascicularis (Crab-eating macaque).